Here is a 189-residue protein sequence, read N- to C-terminus: Prophage DNA-packing protein NohA (189 aa).

The protein belongs to the terminase small subunit family.

In Escherichia coli (strain K12), this protein is Prophage DNA-packing protein NohA (nohA).